Reading from the N-terminus, the 324-residue chain is mRNA decay activator protein ZFP36 (324 aa).

Positions 1–15 are necessary for nuclear export; it reads MDLAAIYKSLLSLSP. Residues 1 to 98 are necessary and sufficient for the association with mRNA decay enzymes and mRNA decay activation; that stretch reads MDLAAIYKSL…PTSPTATPTT (98 aa). Necessary for localization of ARE-containing mRNAs to processing bodies (PBs) regions lie at residues 1 to 172 and 98 to 324; these read MDLA…DLAA and TSSR…SVSE. Residues 15-46 are compositionally biased toward low complexity; sequence PELPSDLGETESSTSWASSGPWSLSSSDSSLP. Positions 15–50 are disordered; that stretch reads PELPSDLGETESSTSWASSGPWSLSSSDSSLPEVAA. Position 58 is a phosphoserine; by MAPKAPK2 (Ser58). Position 64 is a phosphoserine (Ser64). The stretch at 69–73 is one P-P-P-P-G repeat; that stretch reads PPPPG. Residues 76-100 form a disordered region; sequence PLAPRPSSDWSPSPTSPTATPTTSS. Phosphoserine occurs at positions 86 and 88. Residue Thr90 is modified to Phosphothreonine. At Ser91 the chain carries Phosphoserine. Residues 93 to 166 are necessary for nuclear localization; sequence TATPTTSSRY…GSRCHFIHNP (74 aa). A necessary for RNA-binding region spans residues 95 to 171; it reads TPTTSSRYKT…FIHNPSEDLA (77 aa). C3H1-type zinc fingers lie at residues 101–129 and 139–167; these read RYKTELCRTFSESGRCRYGAKCQFAHGLG and KYKTELCHKFYLQGRCPYGSRCHFIHNPS. Residues 101–192 form a necessary for interaction with PABPN1 region; the sequence is RYKTELCRTF…ISFSGLPSGR (92 aa). Ser167 carries the post-translational modification Phosphoserine. Residues 172 to 324 form a necessary for mRNA decay activation region; that stretch reads APGHPHVLRQ…PIFNRISVSE (153 aa). Ser184 carries the phosphoserine; by MAPKAPK2 modification. 2 disordered regions span residues 185 to 227 and 270 to 324; these read FSGL…LLLS and PSAH…SVSE. Ser195 carries the post-translational modification Phosphoserine. The stretch at 196–200 is one P-P-P-P-G repeat; that stretch reads PPPAS. Over residues 204–214 the composition is skewed to low complexity; that stretch reads PSVSSWSFSPS. Phosphoserine is present on Ser216. One copy of the P-P-P-P-G repeat lies at 218–222; sequence PPPPG. At Ser227 the chain carries Phosphoserine; by MAPK1; in vitro. 3 positions are modified to phosphoserine: Ser274, Ser294, and Ser321. The segment at 310 to 324 is interaction with CNOT1; sequence APRRLPIFNRISVSE.

Associates with cytoplasmic CCR4-NOT and PAN2-PAN3 deadenylase complexes to trigger ARE-containing mRNA deadenylation and decay processes. Part of a mRNA decay activation complex at least composed of poly(A)-specific exoribonucleases CNOT6, EXOSC2 and XRN1 and mRNA-decapping enzymes DCP1A and DCP2. Associates with the RNA exosome complex. Interacts (via phosphorylated form) with 14-3-3 proteins; these interactions promote exclusion of ZFP36 from cytoplasmic stress granules in response to arsenite treatment in a MAPKAPK2-dependent manner and does not prevent CCR4-NOT deadenylase complex recruitment or ZFP36-induced ARE-containing mRNA deadenylation and decay processes. Interacts with 14-3-3 proteins; these interactions occur in response to rapamycin in an Akt-dependent manner. Interacts with AGO2 and AGO4. Interacts (via C-terminus) with CNOT1; this interaction occurs in a RNA-independent manner and induces mRNA deadenylation. Interacts (via N-terminus) with CNOT6. Interacts with CNOT6L. Interacts (via C-terminus) with CNOT7; this interaction occurs in a RNA-independent manner, induces mRNA deadenylation and is inhibited in a phosphorylation MAPKAPK2-dependent manner. Interacts (via unphosphorylated form) with CNOT8; this interaction occurs in a RNA-independent manner and is inhibited in a phosphorylation MAPKAPK2-dependent manner. Interacts with DCP1A. Interacts (via N-terminus) with DCP2. Interacts with EDC3. Interacts (via N-terminus) with EXOSC2. Interacts with heat shock 70 kDa proteins. Interacts with KHSRP; this interaction increases upon cytokine-induced treatment. Interacts with MAP3K4; this interaction enhances the association with SH3KBP1/CIN85. Interacts with MAPKAPK2; this interaction occurs upon skeletal muscle satellite cell activation. Interacts with NCL. Interacts with NUP214; this interaction increases upon lipopolysaccharide (LPS) stimulation. Interacts with PABPC1; this interaction occurs in a RNA-dependent manner. Interacts (via hypophosphorylated form) with PABPN1 (via RRM domain and C-terminal arginine-rich region); this interaction occurs in the nucleus in a RNA-independent manner, decreases in presence of single-stranded poly(A) RNA-oligomer and in a p38 MAPK-dependent-manner and inhibits nuclear poly(A) tail synthesis. Interacts with PAN2. Interacts (via C3H1-type zinc finger domains) with PKM. Interacts (via C3H1-type zinc finger domains) with nuclear RNA poly(A) polymerase. Interacts with PPP2CA; this interaction occurs in LPS-stimulated cells and induces ZFP36 dephosphorylation, and hence may promote ARE-containing mRNAs decay. Interacts (via C-terminus) with PRR5L (via C-terminus); this interaction may accelerate ZFP36-mediated mRNA decay during stress. Interacts (via C-terminus) with SFN; this interaction occurs in a phosphorylation-dependent manner. Interacts (via extreme C-terminal region) with SH3KBP1/CIN85 (via SH3 domains); this interaction enhances MAP3K4-induced phosphorylation of ZFP36 at Ser-64 and Ser-91 and does not alter neither ZFP36 binding to ARE-containing transcripts nor TNF-alpha mRNA decay. Interacts with XRN1. Interacts (via C-terminus and Ser-184 phosphorylated form) with YWHAB; this interaction occurs in a p38/MAPKAPK2-dependent manner, increases cytoplasmic localization of ZFP36 and protects ZFP36 from Ser-184 dephosphorylation by serine/threonine phosphatase 2A, and hence may be crucial for stabilizing ARE-containing mRNAs. Interacts (via phosphorylated form) with YWHAE. Interacts (via C-terminus) with YWHAG; this interaction occurs in a phosphorylation-dependent manner. Interacts with YWHAH; this interaction occurs in a phosphorylation-dependent manner. Interacts with YWHAQ; this interaction occurs in a phosphorylation-dependent manner. Interacts with (via C-terminus) YWHAZ; this interaction occurs in a phosphorylation-dependent manner. Does not interact with SH3KBP1. Interacts (via P-P-P-P-G repeats) with GIGYF2; the interaction is direct. In terms of processing, phosphorylated. Phosphorylation at serine and/or threonine residues occurs in a p38 MAPK- and MAPKAPK2-dependent manner. Phosphorylated by MAPKAPK2 at Ser-58 and Ser-184; phosphorylation increases its stability and cytoplasmic localization, promotes binding to 14-3-3 adapter proteins and inhibits the recruitment of cytoplasmic CCR4-NOT and PAN2-PAN3 deadenylase complexes to the mRNA decay machinery, thereby inhibiting ZFP36-induced ARE-containing mRNA deadenylation and decay processes. Phosphorylation by MAPKAPK2 does not impair ARE-containing RNA-binding. Phosphorylated in a MAPKAPK2- and p38 MAPK-dependent manner upon skeletal muscle satellite cell activation; this phosphorylation inhibits ZFP36-mediated mRNA decay activity, and hence stabilizes MYOD1 mRNA. Phosphorylated by MAPK1 upon mitogen stimulation. Phosphorylated at Ser-64 and Ser-91; these phosphorylations increase in a SH3KBP1-dependent manner. Phosphorylated at serine and threonine residues in a pyruvate kinase PKM- and p38 MAPK-dependent manner. Phosphorylation at Ser-58 may participate in the PKM-mediated degradation of ZFP36 in a p38 MAPK-dependent manner. Dephosphorylated by serine/threonine phosphatase 2A at Ser-184. Post-translationally, ubiquitinated; pyruvate kinase (PKM)-dependent ubiquitination leads to proteasomal degradation through a p38 MAPK signaling pathway.

It localises to the nucleus. The protein localises to the cytoplasm. The protein resides in the cytoplasmic granule. It is found in the P-body. Functionally, zinc-finger RNA-binding protein that destabilizes numerous cytoplasmic AU-rich element (ARE)-containing mRNA transcripts by promoting their poly(A) tail removal or deadenylation, and hence provide a mechanism for attenuating protein synthesis. Acts as an 3'-untranslated region (UTR) ARE mRNA-binding adapter protein to communicate signaling events to the mRNA decay machinery. Recruits deadenylase CNOT7 (and probably the CCR4-NOT complex) via association with CNOT1, and hence promotes ARE-mediated mRNA deadenylation. Also functions by recruiting components of the cytoplasmic RNA decay machinery to the bound ARE-containing mRNAs. Self regulates by destabilizing its own mRNA. Binds to 3'-UTR ARE of numerous mRNAs. Also binds to ARE of its own mRNA. Plays a role in anti-inflammatory responses; suppresses tumor necrosis factor (TNF)-alpha production by stimulating ARE-mediated TNF-alpha mRNA decay and several other inflammatory ARE-containing mRNAs in interferon (IFN)- and/or lipopolysaccharide (LPS)-induced macrophages. Also plays a role in the regulation of dendritic cell maturation at the post-transcriptional level, and hence operates as part of a negative feedback loop to limit the inflammatory response. Promotes ARE-mediated mRNA decay of hypoxia-inducible factor HIF1A mRNA during the response of endothelial cells to hypoxia. Positively regulates early adipogenesis of preadipocytes by promoting ARE-mediated mRNA decay of immediate early genes (IEGs). Negatively regulates hematopoietic/erythroid cell differentiation by promoting ARE-mediated mRNA decay of the transcription factor STAT5B mRNA. Plays a role in maintaining skeletal muscle satellite cell quiescence by promoting ARE-mediated mRNA decay of the myogenic determination factor MYOD1 mRNA. Also associates with and regulates the expression of non-ARE-containing target mRNAs at the post-transcriptional level, such as MHC class I mRNAs. Participates in association with argonaute RISC catalytic components in the ARE-mediated mRNA decay mechanism; assists microRNA (miRNA) targeting ARE-containing mRNAs. May also play a role in the regulation of cytoplasmic mRNA decapping; enhances decapping of ARE-containing RNAs, in vitro. Involved in the delivery of target ARE-mRNAs to processing bodies (PBs). In addition to its cytosolic mRNA-decay function, affects nuclear pre-mRNA processing. Negatively regulates nuclear poly(A)-binding protein PABPN1-stimulated polyadenylation activity on ARE-containing pre-mRNA during LPS-stimulated macrophages. Also involved in the regulation of stress granule (SG) and P-body (PB) formation and fusion. Plays a role in the regulation of keratinocyte proliferation, differentiation and apoptosis. Plays a role as a tumor suppressor by inhibiting cell proliferation in breast cancer cells. The chain is mRNA decay activator protein ZFP36 from Bos taurus (Bovine).